Reading from the N-terminus, the 267-residue chain is Protein COFACTOR ASSEMBLY OF COMPLEX C SUBUNIT B CCB1, chloroplastic (267 aa).

The transit peptide at 1–44 (MATKLISPPLSCPWVTSREVIIKGLPRRRREWMVTKRNRVSAVT) directs the protein to the chloroplast. The Lumenal segment spans residues 45–84 (AMIVEPLSVVSSSAIQIHQWWEQNPNSLLLMTEATGGYSL). Residues 85 to 105 (ASYYTSLGLFVISVPGLWSLI) form a helical membrane-spanning segment. The Stromal portion of the chain corresponds to 106-164 (KRSVKSKIVRKTFVVNDVKKEPKQVAGEILSFFTRKNFNITDRGETITFEGKMVPSRGQ). The chain crosses the membrane as a helical span at residues 165 to 185 (AALLTFCTCISLASVGLVLTI). Threonine 186 is a topological domain (lumenal). A helical transmembrane segment spans residues 187–207 (VPDFGNNWFFIILLSPLAGVY). Topologically, residues 208–267 (YWKKASRKEEIKVKMMVGSKGRLDEIVVQGDDVQVEEMRKELQLNEKGMVYVKGLFERSS) are stromal.

The protein resides in the plastid. Its subcellular location is the chloroplast thylakoid membrane. Required for the biogenesis and accumulation of native cytochrome b6 in the thylakoid membrane. Controls the conversion of apocytochrome b6 to holocytochrome b6. Required for covalent binding of the c-type heme to cytochrome b6. This chain is Protein COFACTOR ASSEMBLY OF COMPLEX C SUBUNIT B CCB1, chloroplastic, found in Arabidopsis thaliana (Mouse-ear cress).